Here is a 523-residue protein sequence, read N- to C-terminus: Calcium and calcium/calmodulin-dependent serine/threonine-protein kinase DMI-3 (523 aa).

One can recognise a Protein kinase domain in the interval 12–306 (YEVSEILGRG…ALELLSDPWV (295 aa)). Residues 18-26 (LGRGGFSVV) and Lys47 contribute to the ATP site. Residue Asp171 is the Proton acceptor of the active site. At Thr271 the chain carries Phosphothreonine. The calmodulin-binding stretch occupies residues 329–342 (ARRKLRAAAIASVW). EF-hand domains are found at residues 400-435 (SLIP…LKNS), 436-471 (KGED…LPYD), and 478-513 (TEPG…DSSL). Residues Asp413, Asn415, Asp417, Thr419, Glu424, Asp449, Asp451, Ser453, Cys455, Glu460, Asp491, Asn493, Asp495, Lys497, and Glu502 each coordinate Ca(2+).

It belongs to the protein kinase superfamily. CAMK Ser/Thr protein kinase family. CaMK subfamily. Interacts with IPD3. Post-translationally, autophosphorylation. As to expression, highly expressed in roots. Expressed in root hairs and nodules. Expressed at low levels in flowers. Not detected in leaves or stems.

It is found in the nucleus. It catalyses the reaction L-seryl-[protein] + ATP = O-phospho-L-seryl-[protein] + ADP + H(+). The enzyme catalyses L-threonyl-[protein] + ATP = O-phospho-L-threonyl-[protein] + ADP + H(+). Its activity is regulated as follows. Activated by calcium. Autophosphorylation may play an important role in the regulation of the kinase activity. Functionally, during nodulation, plays a central role in bacterial infection and contributes to nodule organogenesis. Protein kinase that recognizes the calcium spiking induced by Nod factors and translates this signal to components controlling nodulation and mycorrhizal infection responses. May phosphorylate the NSP1 protein. Required in epidermal and cortical cells to promote infection thread (IT) formation in root hairs. This Medicago truncatula (Barrel medic) protein is Calcium and calcium/calmodulin-dependent serine/threonine-protein kinase DMI-3.